The primary structure comprises 2210 residues: RNA-directed RNA polymerase L (2210 aa).

The interval 26–284 is endonuclease; that stretch reads RDIFLSQHHP…SHKDSDVPSC (259 aa). Positions 51, 89, and 102 each coordinate Mn(2+). Lys115 is a catalytic residue. The RdRp catalytic domain occupies 1171 to 1368; the sequence is CDMKMAVNNG…FLSSKLNKFI (198 aa). Asp1329 is a Mg(2+) binding site.

Belongs to the Bunyavirales RNA polymerase family. As to quaternary structure, homomultimer; the oligomeric structure is essential for the polymerase activity. Interacts with nucleoprotein N. Interacts with protein Z; this interaction inhibits viral transcription and replication, Z partially blocks the product exit tunnel for the releasing nascent RNA product. The cofactor is Mn(2+). Mg(2+) serves as cofactor.

The protein resides in the virion. Its subcellular location is the host cytoplasm. The catalysed reaction is RNA(n) + a ribonucleoside 5'-triphosphate = RNA(n+1) + diphosphate. Its function is as follows. RNA-dependent RNA polymerase, which is responsible for the replication and transcription of the viral RNA genome using antigenomic RNA as an intermediate. During transcription, synthesizes subgenomic RNAs and assures their capping by a cap-snatching mechanism, which involves the endonuclease activity cleaving the host capped pre-mRNAs. These short capped RNAs are then used as primers for viral transcription. The 3'-end of subgenomic mRNAs molecules are heterogeneous and not polyadenylated. The replicase function is to direct synthesis of antigenomic and genomic RNA which are encapsidated and non capped. As a consequence of the use of the same enzyme for both transcription and replication, these mechanisms need to be well coordinated. These processes may be regulated by proteins N and Z in a dose-dependent manner. Z protein inhibits the viral polymerase L und thus the viral transcription and RNA synthesis. This is RNA-directed RNA polymerase L from Junin mammarenavirus (JUNV).